We begin with the raw amino-acid sequence, 132 residues long: MAKSKKDSGARRKKVTRTVADGIAHVHASFNNTIITITDRQGNALSWATSGGAGFRGSRKSTPFAAQVAAENAGNAAKDYGLKNLEVRVKGPGPGRESSIRALNGCGYKITHIEDVTPIPHNGCRPPKKRRV.

It belongs to the universal ribosomal protein uS11 family. In terms of assembly, part of the 30S ribosomal subunit. Interacts with proteins S7 and S18. Binds to IF-3.

Its function is as follows. Located on the platform of the 30S subunit, it bridges several disparate RNA helices of the 16S rRNA. Forms part of the Shine-Dalgarno cleft in the 70S ribosome. The protein is Small ribosomal subunit protein uS11 of Alcanivorax borkumensis (strain ATCC 700651 / DSM 11573 / NCIMB 13689 / SK2).